The following is a 318-amino-acid chain: Aquaporin-1 (318 aa).

Over residues 1-16 the composition is skewed to polar residues; that stretch reads MVQFGSRANTNMTGLP. A disordered region spans residues 1–27; that stretch reads MVQFGSRANTNMTGLPTEQAVEDRRVG. The Cytoplasmic segment spans residues 1 to 36; it reads MVQFGSRANTNMTGLPTEQAVEDRRVGNPKRDRMRN. A helical membrane pass occupies residues 37–57; it reads ALVIVLGEFCGTFMFLLLSFI. The Extracellular segment spans residues 58–77; sequence GAQTALVTNSPSDAGSPLLP. A helical transmembrane segment spans residues 78–98; sequence FSLMYIAASFGTALAVNVWIF. The Cytoplasmic segment spans residues 99–108; sequence YRVSGGMFNP. The NPA 1 signature appears at 107–109; sequence NPA. The helical transmembrane segment at 109–129 threads the bilayer; it reads AVTLGLVLVGAVTPIHALLII. The Extracellular segment spans residues 130-165; that stretch reads PTQLVAAITAAGITDALLPGKLLVTNALGNGTSVAQ. N159 carries N-linked (GlcNAc...) asparagine glycosylation. Residues 166–186 traverse the membrane as a helical segment; sequence GVFIEMFLTSQLVLTVYFLAV. Residues 187–193 are Cytoplasmic-facing; sequence EKHRSTH. A helical membrane pass occupies residues 194 to 214; that stretch reads LAPIGIGISVFIAHICATNWT. Over 215-236 the chain is Extracellular; the sequence is GTSINPARSFGPSVVAGFHGYD. Residues 219–221 carry the NPA 2 motif; sequence NPA. The helical transmembrane segment at 237-257 threads the bilayer; that stretch reads WIYYIGPFMGSLLAFGCYKIF. The Cytoplasmic portion of the chain corresponds to 258–318; sequence KVLEYQTANP…NDSVIDDQMV (61 aa). A disordered region spans residues 268 to 318; sequence GQDDDNLDRSGHHHFFGHRKEPMPHTHTDNIEPKDHGVPQRNDSVIDDQMV. Basic and acidic residues predominate over residues 285–305; sequence HRKEPMPHTHTDNIEPKDHGV.

The protein belongs to the MIP/aquaporin (TC 1.A.8) family.

It localises to the nucleus membrane. The enzyme catalyses H2O(in) = H2O(out). Probable water channel involved in responses to changes in environmental conditions and conidiation. Involved in responses to hyperosmotic conditions, oxidative stress and cell wall destabilization. Also required for proper transcriptional activation of genes involved in aurofusarin biosynthesis. Not involved in pathogenicity, but negatively regulates deoxynivalenol (DON) production. The sequence is that of Aquaporin-1 from Gibberella zeae (strain ATCC MYA-4620 / CBS 123657 / FGSC 9075 / NRRL 31084 / PH-1) (Wheat head blight fungus).